Consider the following 373-residue polypeptide: Mannitol-1-phosphate 5-dehydrogenase (373 aa).

3–14 (ALHFGAGNIGRG) is an NAD(+) binding site.

It belongs to the mannitol dehydrogenase family.

The enzyme catalyses D-mannitol 1-phosphate + NAD(+) = beta-D-fructose 6-phosphate + NADH + H(+). This Bacillus velezensis (strain DSM 23117 / BGSC 10A6 / LMG 26770 / FZB42) (Bacillus amyloliquefaciens subsp. plantarum) protein is Mannitol-1-phosphate 5-dehydrogenase.